The primary structure comprises 119 residues: Immunoglobulin lambda variable 2-11 (119 aa).

A signal peptide spans 1–19; it reads MAWALLLLSLLTQGTGSWA. Position 20 is a pyrrolidone carboxylic acid (Gln20). The interval 20–44 is framework-1; sequence QSALTQPRSVSGSPGQSVTISCTGT. In terms of domain architecture, Ig-like spans 20-119; that stretch reads QSALTQPRSV…CSYAGSYTFH (100 aa). Cysteines 41 and 109 form a disulfide. A complementarity-determining-1 region spans residues 45–53; that stretch reads SSDVGGYNY. The interval 54-70 is framework-2; the sequence is VSWYQQHPGKAPKLMIY. Positions 71 to 73 are complementarity-determining-2; sequence DVS. The framework-3 stretch occupies residues 74–109; it reads KRPSGVPDRFSGSKSGNTASLTISGLQAEDEADYYC. Residues 110–119 are complementarity-determining-3; it reads CSYAGSYTFH.

In terms of assembly, immunoglobulins are composed of two identical heavy chains and two identical light chains; disulfide-linked.

It is found in the secreted. Its subcellular location is the cell membrane. Its function is as follows. V region of the variable domain of immunoglobulin light chains that participates in the antigen recognition. Immunoglobulins, also known as antibodies, are membrane-bound or secreted glycoproteins produced by B lymphocytes. In the recognition phase of humoral immunity, the membrane-bound immunoglobulins serve as receptors which, upon binding of a specific antigen, trigger the clonal expansion and differentiation of B lymphocytes into immunoglobulins-secreting plasma cells. Secreted immunoglobulins mediate the effector phase of humoral immunity, which results in the elimination of bound antigens. The antigen binding site is formed by the variable domain of one heavy chain, together with that of its associated light chain. Thus, each immunoglobulin has two antigen binding sites with remarkable affinity for a particular antigen. The variable domains are assembled by a process called V-(D)-J rearrangement and can then be subjected to somatic hypermutations which, after exposure to antigen and selection, allow affinity maturation for a particular antigen. This Homo sapiens (Human) protein is Immunoglobulin lambda variable 2-11.